The sequence spans 394 residues: 2-oxoglutarate and iron-dependent oxygenase domain-containing protein CP2 (394 aa).

Positions 1–35 (MSSEQREGSQETTTTTVEGNGTIAGQNSHSAAPTT) are disordered. Positions 17-35 (VEGNGTIAGQNSHSAAPTT) are enriched in polar residues. Residues 248 to 347 (DSHHGFVVEY…RVNMLLWCRS (100 aa)) enclose the Fe2OG dioxygenase domain. Residues histidine 268, aspartate 270, and histidine 328 each contribute to the Fe cation site. Arginine 338 contributes to the 2-oxoglutarate binding site.

Fe(2+) is required as a cofactor. Requires L-ascorbate as cofactor. Expressed in roots, cotyledons, rosette leaves, cauline leaves, inflorescences and siliques.

Its subcellular location is the nucleus. The protein localises to the nucleoplasm. Its function is as follows. Participates in the epigenetic repression of flowering genes in association with ICU11. Functions in the repression of several members of the MADS-box transcription factors family, including SEP3, during vegetative development via histone modification. This is 2-oxoglutarate and iron-dependent oxygenase domain-containing protein CP2 from Arabidopsis thaliana (Mouse-ear cress).